A 602-amino-acid polypeptide reads, in one-letter code: Cytoskeleton-associated protein 4 (602 aa).

Residues 1-83 (MPSAKQRGSK…GGGGKSSSSS (83 aa)) form a disordered region. Residues 1–106 (MPSAKQRGSK…SASCSRRLGR (106 aa)) are Cytoplasmic-facing. Phosphoserine occurs at positions 3, 17, and 19. An N6-acetyllysine modification is found at Lys-21. Positions 35–52 (KPPPAPQQPPPPPAPHPQ) are enriched in pro residues. Low complexity predominate over residues 53–64 (QHPQQHPQNQAH). A lipid anchor (S-palmitoyl cysteine; by ZDHHC2) is attached at Cys-100. A helical transmembrane segment spans residues 107 to 127 (ALNFLFYLALVAAAAFSGWCV). Residues 128–602 (HHVLEEVQQV…VKVEKIHEKV (475 aa)) are Extracellular-facing. Residues 130–214 (VLEEVQQVRR…QKLQNEILKD (85 aa)) are a coiled coil. Ser-232 bears the Phosphoserine; by FAM20C mark. Coiled-coil stretches lie at residues 256 to 460 (TEVQ…GLGS) and 533 to 602 (LSSL…HEKV). Ser-312 carries the phosphoserine modification.

In terms of assembly, interacts with REEP5. In terms of processing, reversibly palmitoylated. Palmitoylation at Cys-100 by ZDHHC2 is required for its trafficking from the ER to the plasma membrane and for its perinuclear localization. Palmitoylation by ZDHHC2 is also required for its function in APF-mediated antiproliferative signaling. Post-translationally, increased phosphorylation during mitosis prevents binding to microtubules.

The protein localises to the endoplasmic reticulum membrane. Its subcellular location is the cell membrane. It is found in the cytoplasm. It localises to the cytoskeleton. The protein resides in the perinuclear region. Functionally, mediates the anchoring of the endoplasmic reticulum to microtubules. Its function is as follows. High-affinity epithelial cell surface receptor for the FZD8-related low molecular weight sialoglycopeptide APF/antiproliferative factor. Mediates the APF antiproliferative signaling within cells. The protein is Cytoskeleton-associated protein 4 (CKAP4) of Homo sapiens (Human).